A 502-amino-acid chain; its full sequence is Ubiquitin-associated protein 1 (502 aa).

The interval 1 to 95 (MASKKLGADF…AEAKVNSKSG (95 aa)) is interaction with ESCRT-I. A UMA domain is found at 17 to 63 (LDDVPFKTGDKFKTPAKVGLPIGFSLPDCLQVVREVQYDFSLEKKTI). A compositionally biased stretch (basic and acidic residues) spans 86 to 100 (AEAKVNSKSGPEGDS). Residues 86 to 117 (AEAKVNSKSGPEGDSKMSFSKTHSTATMPPPI) are disordered. A compositionally biased stretch (polar residues) spans 102–112 (MSFSKTHSTAT). A phosphoserine mark is found at S146, S205, and S289. An interaction with PTPN23 region spans residues 260–290 (VSNIKSLSFPKLDSDDSNQKTAKLASTFHST). 2 UBA domains span residues 389–430 (SPSE…LFAH) and 451–498 (QCSE…LMAR).

Component of an ESCRT-I complex (endosomal sorting complex required for transport I) which consists of TSG101, VPS28, VPS37A and UBAP1 in a 1:1:1:1 stoichiometry. Interacts with PTPN23. Interacts (via UBA domains) with ubiquitinated proteins. As to expression, ubiquitous. Highly expressed in heart, brain, placenta, lung, liver, skeletal muscle and pancreas.

The protein localises to the cytoplasm. It localises to the cytosol. The protein resides in the endosome. Its function is as follows. Component of the ESCRT-I complex, a regulator of vesicular trafficking process. Binds to ubiquitinated cargo proteins and is required for the sorting of endocytic ubiquitinated cargos into multivesicular bodies (MVBs). Plays a role in the proteasomal degradation of ubiquitinated cell-surface proteins, such as EGFR and BST2. The polypeptide is Ubiquitin-associated protein 1 (Homo sapiens (Human)).